We begin with the raw amino-acid sequence, 157 residues long: NADPH-dependent 7-cyano-7-deazaguanine reductase (157 aa).

Cys55 functions as the Thioimide intermediate in the catalytic mechanism. The active-site Proton donor is the Asp62. Substrate is bound by residues 77 to 79 and 96 to 97; these read VES and HE.

It belongs to the GTP cyclohydrolase I family. QueF type 1 subfamily.

The protein resides in the cytoplasm. The catalysed reaction is 7-aminomethyl-7-carbaguanine + 2 NADP(+) = 7-cyano-7-deazaguanine + 2 NADPH + 3 H(+). Its pathway is tRNA modification; tRNA-queuosine biosynthesis. Functionally, catalyzes the NADPH-dependent reduction of 7-cyano-7-deazaguanine (preQ0) to 7-aminomethyl-7-deazaguanine (preQ1). This is NADPH-dependent 7-cyano-7-deazaguanine reductase from Neisseria meningitidis serogroup A / serotype 4A (strain DSM 15465 / Z2491).